The following is a 205-amino-acid chain: Small ribosomal subunit protein uS4c (205 aa).

Residues 22–42 form a disordered region; it reads TSKISKKTNTPGEHGQPQNKL. Residues 28–42 are compositionally biased toward polar residues; sequence KTNTPGEHGQPQNKL. The S4 RNA-binding domain maps to 94 to 157; the sequence is MRLDNIVYRL…ASRDLVKKFV (64 aa).

This sequence belongs to the universal ribosomal protein uS4 family. Part of the 30S ribosomal subunit. Contacts protein S5. The interaction surface between S4 and S5 is involved in control of translational fidelity.

It localises to the plastid. Its subcellular location is the chloroplast. Its function is as follows. One of the primary rRNA binding proteins, it binds directly to 16S rRNA where it nucleates assembly of the body of the 30S subunit. With S5 and S12 plays an important role in translational accuracy. This is Small ribosomal subunit protein uS4c (rps4) from Tupiella akineta (Green alga).